The chain runs to 531 residues: Beta-hexosaminidase subunit beta (531 aa).

Positions 1–24 (MRHRGLGLAALLALLAAVAPRSSA) are cleaved as a signal peptide. An N-linked (GlcNAc...) asparagine glycan is attached at Asn-50. Cys-65 and Cys-111 are oxidised to a cystine. 3 N-linked (GlcNAc...) asparagine glycosylation sites follow: Asn-116, Asn-164, and Asn-301. 2 disulfide bridges follow: Cys-283-Cys-334 and Cys-508-Cys-525. Glu-329 serves as the catalytic Proton donor.

It belongs to the glycosyl hydrolase 20 family. There are 3 forms of beta-hexosaminidase: hexosaminidase A is a heterodimer composed of one subunit alpha and one subunit beta (chain A and B); hexosaminidase B is a homodimer of two beta subunits (two chains A and B); hexosaminidase S is a homodimer of two alpha subunits. The composition of the dimer (isozyme A versus isozyme S) has a significant effect on the substrate specificity of the alpha subunit active site.

The protein localises to the lysosome. The protein resides in the cytoplasmic vesicle. It localises to the secretory vesicle. It is found in the cortical granule. It carries out the reaction Hydrolysis of terminal non-reducing N-acetyl-D-hexosamine residues in N-acetyl-beta-D-hexosaminides.. It catalyses the reaction N-acetyl-beta-D-galactosaminyl-(1-&gt;4)-beta-D-3-sulfogalactosyl-(1-&gt;4)-beta-D-glucosyl-(1&lt;-&gt;1')-ceramide + H2O = a beta-D-3-sulfogalactosyl-(1-&gt;4)-beta-D-glucosyl-(1&lt;-&gt;1')-ceramide + N-acetyl-beta-D-galactosamine. The catalysed reaction is a ganglioside GM2 (d18:1(4E)) + H2O = a ganglioside GM3 (d18:1(4E)) + N-acetyl-beta-D-galactosamine. The enzyme catalyses a ganglioside GM2 + H2O = a ganglioside GM3 + N-acetyl-beta-D-galactosamine. It carries out the reaction beta-D-GalNAc-(1-&gt;4)-alpha-L-IdoA-(1-&gt;3)-beta-D-GalNAc-4-sulfate-(1-&gt;4)-alpha-L-IdoA-(1-&gt;3)-D-GalNAc-4-sulfate + H2O = alpha-L-IdoA-(1-&gt;3)-beta-D-GalNAc-4-sulfate-(1-&gt;4)-alpha-L-IdoA-(1-&gt;3)-D-GalNAc-4-sulfate + N-acetyl-D-galactosamine. It catalyses the reaction N-acetyl-beta-D-6-sulfogalactosaminyl-(1-&gt;4)-alpha-L-iduronyl-(1-&gt;3)-N-acetyl-D-6-sulfogalactosamine + H2O = alpha-L-iduronyl-(1-&gt;3)-N-acetyl-D-6-sulfogalactosamine + N-acetyl-D-6-sulfogalactosamine. Its activity is regulated as follows. Addition of GM2A stimulates the hydrolysis of sulfated glycosphingolipid SM2 and the ganglioside GM2. In terms of biological role, hydrolyzes the non-reducing end N-acetyl-D-hexosamine and/or sulfated N-acetyl-D-hexosamine of glycoconjugates, such as the oligosaccharide moieties from proteins and neutral glycolipids, or from certain mucopolysaccharides. The isozyme B does not hydrolyze each of these substrates, however hydrolyzes efficiently neutral oligosaccharide. Only the isozyme A is responsible for the degradation of GM2 gangliosides in the presence of GM2A. During fertilization is responsible, at least in part, for the zona block to polyspermy. Present in the cortical granules of non-activated oocytes, is exocytosed during the cortical reaction in response to oocyte activation and inactivates the sperm galactosyltransferase-binding site, accounting for the block in sperm binding to the zona pellucida. In Felis catus (Cat), this protein is Beta-hexosaminidase subunit beta.